The primary structure comprises 125 residues: Large ribosomal subunit protein bL12 (125 aa).

Residues 96-125 (PAPVKEGATKDEAEEIKKKIEEAGGTAELK) are disordered. The segment covering 102-117 (GATKDEAEEIKKKIEE) has biased composition (basic and acidic residues).

The protein belongs to the bacterial ribosomal protein bL12 family. Homodimer. Part of the ribosomal stalk of the 50S ribosomal subunit. Forms a multimeric L10(L12)X complex, where L10 forms an elongated spine to which 2 to 4 L12 dimers bind in a sequential fashion. Binds GTP-bound translation factors.

Its function is as follows. Forms part of the ribosomal stalk which helps the ribosome interact with GTP-bound translation factors. Is thus essential for accurate translation. This is Large ribosomal subunit protein bL12 from Alcanivorax borkumensis (strain ATCC 700651 / DSM 11573 / NCIMB 13689 / SK2).